A 327-amino-acid polypeptide reads, in one-letter code: Microtubule-associated protein RP/EB family member 2 (327 aa).

Residues 1-21 are disordered; the sequence is MPGPTQTLSPNGENNNDIIQD. Proline 2 carries the N-acetylalanine modification. At serine 9 the chain carries Phosphoserine. In terms of domain architecture, Calponin-homology (CH) spans 57 to 159; it reads TMSRHDIIAW…FIQWFKKFYD (103 aa). A Phosphotyrosine modification is found at tyrosine 167. 2 disordered regions span residues 171–240 and 299–327; these read EARQ…DKDL and ASEE…QEEY. Residues 187-327 are DCTN1-binding; sequence QIFNLPKKSH…EQQPPQQEEY (141 aa). Residues 200–234 are compositionally biased toward low complexity; that stretch reads SPTAGAAKSSPAAKPGSTPSRPSSAKRASSSGSAS. A phosphoserine mark is found at serine 219 and serine 236. Residues 236–306 form the EB1 C-terminal domain; that stretch reads SDKDLETQVI…LYASEEHEGH (71 aa). Residues 259–302 form an APC-binding region; it reads EGVEKERDFYFGKLREIELLCQEHGQENDDLVQRLMDILYASEE. Positions 300–317 are enriched in basic and acidic residues; the sequence is SEEHEGHTEEPEAEEQAH. Residues 318 to 327 are compositionally biased toward low complexity; the sequence is EQQPPQQEEY.

This sequence belongs to the MAPRE family. In terms of assembly, interacts with DCTN1. Interacts with APC (via C-terminal). Interacts with monomeric and polymerized tubulin. Interacts with SLAIN1. Interacts (via the N-terminal region) with BAG1. Interacts with ASB14. Interacts with HAX1; this interaction is essential for epidermal cell migration. Phosphorylated at Ser-236 by CK2 leading to enhanced cell adhesion. Phosphorylated by CDK1 and AURKB during mitosis reduces the binding affinity of MAPRE2 for microtubules. In terms of processing, ubiquitinated in an ASB14-dependent manner; leading to proteasomal degradation. Expressed in different tumor cell lines. Up-regulated in activated B- and T-lymphocytes.

The protein resides in the cytoplasm. It is found in the cytoskeleton. Adapter protein that is involved in microtubule polymerization, and spindle function by stabilizing microtubules and anchoring them at centrosomes. Therefore, ensures mitotic progression and genome stability. Acts as a central regulator of microtubule reorganization in apico-basal epithelial differentiation. Plays a role during oocyte meiosis by regulating microtubule dynamics. Participates in neurite growth by interacting with plexin B3/PLXNB3 and microtubule reorganization during apico-basal epithelial differentiation. Also plays an essential role for cell migration and focal adhesion dynamics. Mechanistically, recruits HAX1 to microtubules in order to regulate focal adhesion dynamics. The chain is Microtubule-associated protein RP/EB family member 2 (MAPRE2) from Homo sapiens (Human).